We begin with the raw amino-acid sequence, 378 residues long: 3,6-diketocamphane 1,6-monooxygenase (378 aa).

Residues H10, S44, M76, and 201–209 contribute to the FMN site; that span reads TGFSYNSPS.

This sequence belongs to the bacterial luciferase oxidoreductase family. Homodimer. Likely forms a loose transient complex with a P.putida flavin reductase that provides the required FMNH(2) to the enzyme.

It catalyses the reaction (1S,4S)-bornane-2,5-dione + FMNH2 + O2 = (1S,4S)-5-oxo-1,2-campholide + FMN + H2O + H(+). In terms of biological role, involved in the degradation and assimilation of (-)-camphor, which allows P.putida strain NCIMB 10007 to grow on this enantiomer of camphor as the sole carbon source. Catalyzes the FMNH(2)-dependent lactonization of 3,6-diketocamphane via a Baeyer-Villiger oxidation to produce the unstable lactone 5-oxo-1,2-campholide with (S,S) configuration, that presumably undergoes spontaneous hydrolysis to form 2-oxo-Delta(3)-4,5,5-trimethylcyclopentenylacetate. Is also able to convert (-)-camphor to the corresponding lactone in vitro. Shows no conversion of (+)-camphor, (+)-fenchone, (-)-fenchone, and (+)-nopinone. Acts on other bicyclic ketones but very poorly on a few 2- and 4-substituted monocyclic ketones. The chain is 3,6-diketocamphane 1,6-monooxygenase from Pseudomonas putida (Arthrobacter siderocapsulatus).